The sequence spans 222 residues: Cytochrome b6 (222 aa).

The helical transmembrane segment at 39–59 (IFYCLGGLTLTCFLIQFATGF) threads the bilayer. Residue tyrosine 41 coordinates heme b. Position 42 (cysteine 42) interacts with heme c. Positions 90, 93, 94, 107, and 110 each coordinate heme b. 3 consecutive transmembrane segments (helical) span residues 97–117 (ASMM…TGGF), 123–143 (LTWV…VTGY), and 193–213 (LHTF…FLMI). Residues histidine 194 and histidine 209 each coordinate heme b. Residues arginine 214 and isoleucine 218 each contribute to the heme c site. Serine 219 is a heme b binding site.

Belongs to the cytochrome b family. PetB subfamily. The 4 large subunits of the cytochrome b6-f complex are cytochrome b6, subunit IV (17 kDa polypeptide, PetD), cytochrome f and the Rieske protein, while the 4 small subunits are PetG, PetL, PetM and PetN. The complex functions as a dimer. Heme b is required as a cofactor. The cofactor is heme c.

The protein resides in the cellular thylakoid membrane. Component of the cytochrome b6-f complex, which mediates electron transfer between photosystem II (PSII) and photosystem I (PSI), cyclic electron flow around PSI, and state transitions. This chain is Cytochrome b6, found in Synechocystis sp. (strain ATCC 27184 / PCC 6803 / Kazusa).